Here is a 349-residue protein sequence, read N- to C-terminus: N-acetyltaurine hydrolase (349 aa).

Histidine 26, histidine 28, glutamate 169, histidine 201, histidine 230, and aspartate 298 together coordinate a divalent metal cation.

It belongs to the metallo-dependent hydrolases superfamily. Phosphotriesterase family. Requires a divalent metal cation as cofactor. In terms of tissue distribution, expressed in the kidney, liver and brainstem.

It is found in the cytoplasm. Its subcellular location is the cytosol. It catalyses the reaction N-acetyltaurine + H2O = taurine + acetate. It carries out the reaction N-propanoyltaurine + H2O = propanoate + taurine. The catalysed reaction is N-acetyl-L-methionine + H2O = L-methionine + acetate. The enzyme catalyses N-acetyl-L-isoleucine + H2O = L-isoleucine + acetate. It catalyses the reaction N-acetyl-L-leucine + H2O = L-leucine + acetate. It carries out the reaction N-acetyl-L-valine + H2O = L-valine + acetate. In terms of biological role, N-acetyltaurine hydrolase that regulates feeding by catalyzing the hydrolysis of N-acetyltaurine into taurine and acetate. N-acetyltaurine has anorexigenic and anti-obesity effects that are dependent on GFRAL receptor and GDF15. PTER also acts on other N-acetyl amino acids (Met, Ile, Leu, Val) and N-propionyltaurine, but at lower rates. This Mus musculus (Mouse) protein is N-acetyltaurine hydrolase.